Consider the following 234-residue polypeptide: Protein UL20 homolog (234 aa).

Transmembrane regions (helical) follow at residues 82 to 102 (VVLF…IFLF), 112 to 132 (FLIL…LEMY), 153 to 173 (IGAL…NMIF), and 191 to 211 (TSGF…ITSI).

The protein belongs to the alphaherpesvirinae UL20 family. Interacts with gK (via N-terminus); this interaction plays a role in the coordinate transport of UL20 and gK to the trans-Golgi network (TGN), and is required for their cell surface expression. Interacts with gB.

Its subcellular location is the virion. It localises to the host cell membrane. It is found in the host endosome membrane. The protein localises to the host Golgi apparatus membrane. The protein resides in the host nucleus membrane. In terms of biological role, plays an essential role in egress of virus particles from the nucleus, cytoplasmic envelopment and virus-induced cell fusion. Forms a functional protein complex with gK and this interaction is absolutely essential for their coordinate intracellular transport, gK glycosylation, expression on host cell surface, and function. Together, they modulate gB-mediated virus-induced cell fusion and virion egress and therefore actively participate in these processes. The polypeptide is Protein UL20 homolog (MDV032) (Gallid herpesvirus 2 (strain Chicken/Md5/ATCC VR-987) (GaHV-2)).